Consider the following 164-residue polypeptide: Zinc finger protein ZAT8 (164 aa).

2 C2H2-type zinc fingers span residues 37-59 (FRCK…RASH) and 85-107 (HPCP…MRRH).

The protein localises to the nucleus. In terms of biological role, probable transcription factor that may be involved in stress responses. This Arabidopsis thaliana (Mouse-ear cress) protein is Zinc finger protein ZAT8 (ZAT8).